We begin with the raw amino-acid sequence, 263 residues long: HTH-type transcriptional repressor NanR (263 aa).

The segment at 1–21 is disordered; it reads MGLMNAFDSQTEDSSPVIGRN. Positions 30–98 constitute an HTH gntR-type domain; sequence KKLSEMVEEE…NGERARVSRP (69 aa). Positions 58–77 form a DNA-binding region, H-T-H motif; sequence ERELMAFFNVGRPSVREALA.

This sequence belongs to the NanR family.

Its function is as follows. Transcriptional repressor that controls expression of the genes required for the catabolism of sialic acids. The polypeptide is HTH-type transcriptional repressor NanR (Escherichia coli O7:K1 (strain IAI39 / ExPEC)).